A 194-amino-acid polypeptide reads, in one-letter code: Putative 3-methyladenine DNA glycosylase (194 aa).

It belongs to the DNA glycosylase MPG family.

The sequence is that of Putative 3-methyladenine DNA glycosylase from Synechococcus elongatus (strain ATCC 33912 / PCC 7942 / FACHB-805) (Anacystis nidulans R2).